A 318-amino-acid polypeptide reads, in one-letter code: Type II methyltransferase M.HaeII (318 aa).

An SAM-dependent MTase C5-type domain is found at 4–304 (YKTIDLFAGI…GSMINSLNMA (301 aa)). C73 is a catalytic residue.

Belongs to the class I-like SAM-binding methyltransferase superfamily. C5-methyltransferase family.

The catalysed reaction is a 2'-deoxycytidine in DNA + S-adenosyl-L-methionine = a 5-methyl-2'-deoxycytidine in DNA + S-adenosyl-L-homocysteine + H(+). In terms of biological role, a methylase, recognizes the double-stranded sequence 5'-RGCGCY-3', methylates C-? on both strands, and protects the DNA from cleavage by the HaeII endonuclease. The polypeptide is Type II methyltransferase M.HaeII (haeIIM) (Haemophilus aegyptius).